Consider the following 348-residue polypeptide: Beta-hexosaminidase (348 aa).

Residues aspartate 64, arginine 72, arginine 138, and 168–169 (KH) each bind substrate. The Proton donor/acceptor role is filled by histidine 181. Aspartate 252 serves as the catalytic Nucleophile.

The protein belongs to the glycosyl hydrolase 3 family. NagZ subfamily.

It localises to the cytoplasm. The catalysed reaction is Hydrolysis of terminal non-reducing N-acetyl-D-hexosamine residues in N-acetyl-beta-D-hexosaminides.. It functions in the pathway cell wall biogenesis; peptidoglycan recycling. Functionally, plays a role in peptidoglycan recycling by cleaving the terminal beta-1,4-linked N-acetylglucosamine (GlcNAc) from peptide-linked peptidoglycan fragments, giving rise to free GlcNAc, anhydro-N-acetylmuramic acid and anhydro-N-acetylmuramic acid-linked peptides. This chain is Beta-hexosaminidase, found in Nitrosomonas eutropha (strain DSM 101675 / C91 / Nm57).